The sequence spans 282 residues: Elongation factor Ts (282 aa).

The involved in Mg(2+) ion dislocation from EF-Tu stretch occupies residues 80 to 83 (TDFV).

This sequence belongs to the EF-Ts family.

The protein localises to the cytoplasm. In terms of biological role, associates with the EF-Tu.GDP complex and induces the exchange of GDP to GTP. It remains bound to the aminoacyl-tRNA.EF-Tu.GTP complex up to the GTP hydrolysis stage on the ribosome. This is Elongation factor Ts from Chlamydia trachomatis serovar L2b (strain UCH-1/proctitis).